The chain runs to 484 residues: Putative sodium/proton-dependent alanine carrier protein YrbD (484 aa).

Transmembrane regions (helical) follow at residues 11 to 31, 66 to 88, 92 to 114, 139 to 159, 172 to 192, 205 to 225, 238 to 258, 292 to 312, 350 to 370, 390 to 410, and 416 to 436; these read VLWS…FSIM, ALSG…FGGP, FWMW…LAQI, WFAV…MPGV, FGIS…FIIF, IVPF…VMNV, SAFA…SWGV, AFSV…MILF, GFGA…TIMA, WAML…TVKT, and ALGD…IVLL.

The protein belongs to the alanine or glycine:cation symporter (AGCS) (TC 2.A.25) family.

The protein localises to the cell membrane. This chain is Putative sodium/proton-dependent alanine carrier protein YrbD (yrbD), found in Bacillus subtilis (strain 168).